The chain runs to 463 residues: T-box transcription factor TBX1-B (463 aa).

Disordered regions lie at residues 39-58 and 75-102; these read SPSP…PCSA and GASS…APVK. The span at 75–96 shows a compositional bias: low complexity; that stretch reads GASSSSCASSTPGSGSTGSSSG. The T-box DNA-binding region spans 119–297; that stretch reads LWDEFNQLGT…SNPFAKGFRD (179 aa). 2 disordered regions span residues 320 to 343 and 367 to 406; these read RSRN…RREY and SPSL…HHHP. The span at 323–332 shows a compositional bias: polar residues; it reads NPVSSPPQNG. Positions 333–343 are enriched in basic and acidic residues; the sequence is SDKDGDGRREY. Positions 367–380 are enriched in low complexity; that stretch reads SPSLPVPGGLVPLS. Positions 420-431 match the Nuclear localization signal motif; it reads KTRPAPYPLPSI.

As to quaternary structure, binds DNA as a dimer. Interacts with dscr6/ripply3.

Its subcellular location is the nucleus. In terms of biological role, probable transcriptional regulator involved in developmental processes. Binds to the palindromic T site 5'-TTCACACCTAGGTGTGAA-3' DNA sequence. Induces pre-placodal ectoderm (PPE) gene expression in regions where RIPPLY3 is absent. Plays a role in the formation of the anteroposterior (AP) axis during embryonic development; required to establish the posterolateral border of the pre-placodal ectoderm (PPE) acting downstream of the retinoic acid receptor (RAR) signaling. Its function is as follows. Probable transcriptional regulator involved in developmental processes. Binds to the palindromic T site 5'-TTCACACCTAGGTGTGAA-3' DNA sequence. Is required for normal development of the pharyngeal arch arteries. The chain is T-box transcription factor TBX1-B (tbx1-b) from Xenopus laevis (African clawed frog).